Here is a 390-residue protein sequence, read N- to C-terminus: Olfactomedin-like protein 3A (390 aa).

Residues 1-17 form the signal peptide; that stretch reads MRALQLLVLVLSGLVGA. Residues 18–91 are a coiled coil; that stretch reads QQQALMDYLE…RVDRVEREMD (74 aa). The Olfactomedin-like domain maps to 130-386; the sequence is DCSDMISSIK…QILYKLQLKK (257 aa). C131 and C313 are disulfide-bonded. Residue N169 is glycosylated (N-linked (GlcNAc...) asparagine).

It belongs to the OLFML3 family.

It localises to the secreted. Functionally, secreted scaffold protein that plays an essential role in dorsoventral patterning during early development. Stabilizes axial formation by restricting chordin (CHRD) activity on the dorsal side. Acts by facilitating the association between the tolloid proteases and their substrate chordin (CHRD), leading to enhance chordin (CHRD) degradation. The sequence is that of Olfactomedin-like protein 3A (olfml3a) from Danio rerio (Zebrafish).